We begin with the raw amino-acid sequence, 901 residues long: Probable inorganic carbon transporter subunit DabA (901 aa).

Cys-424, Asp-426, His-606, and Cys-621 together coordinate Zn(2+).

Belongs to the inorganic carbon transporter (TC 9.A.2) DabA family. Forms a complex with DabB. Zn(2+) is required as a cofactor.

The protein localises to the cell membrane. Its function is as follows. Part of an energy-coupled inorganic carbon pump. This Staphylococcus aureus (strain bovine RF122 / ET3-1) protein is Probable inorganic carbon transporter subunit DabA.